Consider the following 465-residue polypeptide: ATP synthase subunit beta (465 aa).

152 to 159 (GGAGVGKT) contacts ATP.

This sequence belongs to the ATPase alpha/beta chains family. F-type ATPases have 2 components, CF(1) - the catalytic core - and CF(0) - the membrane proton channel. CF(1) has five subunits: alpha(3), beta(3), gamma(1), delta(1), epsilon(1). CF(0) has three main subunits: a(1), b(2) and c(9-12). The alpha and beta chains form an alternating ring which encloses part of the gamma chain. CF(1) is attached to CF(0) by a central stalk formed by the gamma and epsilon chains, while a peripheral stalk is formed by the delta and b chains.

It is found in the cell inner membrane. It catalyses the reaction ATP + H2O + 4 H(+)(in) = ADP + phosphate + 5 H(+)(out). Produces ATP from ADP in the presence of a proton gradient across the membrane. The catalytic sites are hosted primarily by the beta subunits. This is ATP synthase subunit beta from Campylobacter fetus subsp. fetus (strain 82-40).